The following is a 745-amino-acid chain: MHWVKILGVALGAAALLGLGIILGHFAIPKATSPLTSSTSDSQDLDLAILDSVMGQLDASRIRENLRELSKEPHVATSPRDEALVQLLLGRWKDTATGLDSAKTYEYRVLLSFPNAEQPNSVEVVGPNGTTFHSFQPFEKNLTGEQAGPNVLQPYAAYAPPGTPKGLLVYANQGSEEDFKELETQGINLEGTIALTRYGGVGRGAKAINAAKHGVVGVLVYTDPGDINDGKSLPNETFPNSWRLPPSGVERGSYYEYFGDPLTPYLPAHPSSFRLDPHNTSGFPPIPTQPIGFEDARDLLCNLTGTSAPAFWQGALGCEYKLGPGFEPNGSFPAGSEVKVSVHNRLELRTSSNVLGIIQGAVEPDRYVIYGNHRDSWVHGAVDPSSGTAVLLEISRVLGTLLKKGTWRPRRSIIFASWGAEEFGLIGSTEFTEEFLSKLQERTVAYINVDISVFSNATLRAQGTPPVQSVIFSATKEISAPGSSGLSIYDNWIRYTNRTSPVYGLVPSLGTLGAGSDYAAFVHFLGITSMDLAYTYDRSKTSARIYPTYHTAFDTFDYVEKFLDPGFSSHQAVARTAGSVLLRLSDSLFLPLNVSDYSETLQSFLQAAQEALGTQLEKQNISLGPLVTAVANFKAAAASLGEHILTLQKSSPDPLQVRMVNDQLMLLERAFLNPRAFPEERHYSHVLWAPNTASVDTFPGLANAYAKAQEINSGSEAWAEVQRQLSIVVTALEGAAATLVPVADL.

The Cytoplasmic portion of the chain corresponds to 1–6; that stretch reads MHWVKI. The helical; Signal-anchor for type II membrane protein transmembrane segment at 7-28 threads the bilayer; sequence LGVALGAAALLGLGIILGHFAI. The Extracellular portion of the chain corresponds to 29–745; that stretch reads PKATSPLTSS…AATLVPVADL (717 aa). N-linked (GlcNAc...) asparagine glycosylation is found at Asn128, Asn141, and Asn235. Residues Thr263 and Leu266 each coordinate Ca(2+). 3 N-linked (GlcNAc...) asparagine glycosylation sites follow: Asn279, Asn302, and Asn329. A disulfide bridge links Cys301 with Cys318. Positions 373 and 383 each coordinate Zn(2+). Residue Glu421 is the Proton donor/acceptor of the active site. Glu422 is a binding site for Zn(2+). Residues Glu430 and Glu433 each coordinate Ca(2+). Position 450 (Asp450) interacts with Zn(2+). 2 N-linked (GlcNAc...) asparagine glycosylation sites follow: Asn456 and Asn497. His550 lines the Zn(2+) pocket. N-linked (GlcNAc...) asparagine glycosylation is found at Asn593 and Asn620.

It belongs to the peptidase M28 family. M28B subfamily. In terms of assembly, homodimer. Zn(2+) is required as a cofactor. N-glycosylated.

It is found in the apical cell membrane. In terms of biological role, aminopeptidase with broad substrate specificity. Has lower activity with substrates that have Asp or Glu in the P2' position, or Pro in the P3' position. Lacks activity with substrates that have both Pro in the P3' position and Asp or Glu in the P2' position. Lacks carboxypeptidase activity. Lacks dipeptidyl-peptidase IV type activity. This Mus musculus (Mouse) protein is Aminopeptidase NAALADL1 (Naaladl1).